An 831-amino-acid polypeptide reads, in one-letter code: MFSFFIRKIFGSKNDRYLKSLSPILDQINALESTMKALSDKEIPVQLATFKQQLQEGKRTIDELLPEVFALVRETSFRVLGMRHFDVQLIGGISLHRGKIAEMKTGEGKTLMATLPVVLNALEGKGVHVVTVNDYLAQRDAEWMGALYSALGLTTGVLTSGLSDDARKEAYAADITYGTNNEFGFDFLRDNMKFYPNQLVQRGHFFAIIDEVDSILIDEARTPLIISGGSEQSTTMYTQIDKIIRNLKPQQDFSIDEKGKVVILSDEGAVQVEKALGIDNMYDPSNIAIQHHVLQALKAHYIFRRDVDYIVKDDQVVIVDEFTGRLMPGRRFSDGLHQALEAKEMVTVAAENQTLASITFQNYFRMYNKLAGMTGTADTEAVEFAQIYGLEVVVIPSNKPMIRKDHSDVIYRTRKEKFDAIVKAIIELHKKGQPVLVGTISIETSELISSMLRKKNISHNVLNAKHHAQEAEIIAQAGQVGKVTIATNMAGRGTDIVLGDSVVELGGLHILGTERHESRRIDNQLRGRAGRQGDPGSSRFYLSLEDDLMRLFGSDKLSGLMQRLGMEEGEPIENIMVSRAIESAQKRVEGHHFEIRKSLLDYDNVMNQQRTVIYTLRHNIMNDPEPMDIILEYLDELLSDIYIELEDNDNNELNKSIHTQLYDIMNLSQVMSIDNTLPTKEQAKTLILSMFEKLKSKAGEAYNDLLRYVLLEELDRCWKDHLRNMDFLREGIGLRGYGQRDPKLEYKKEGFVLFQELLANIREGVFRTFTRLHLEKKEDNFFQHEPINDLWYPASHEKETKFQVKKTDRVGRNDLCPCGSGKKYKKCCGVH.

Residues glutamine 88, 106-110 (GEGKT), and aspartate 495 contribute to the ATP site. 4 residues coordinate Zn(2+): cysteine 816, cysteine 818, cysteine 827, and cysteine 828.

Belongs to the SecA family. As to quaternary structure, monomer and homodimer. Part of the essential Sec protein translocation apparatus which comprises SecA, SecYEG and auxiliary proteins SecDF-YajC and YidC. Requires Zn(2+) as cofactor.

Its subcellular location is the cell membrane. The protein resides in the cytoplasm. It catalyses the reaction ATP + H2O + cellular proteinSide 1 = ADP + phosphate + cellular proteinSide 2.. Part of the Sec protein translocase complex. Interacts with the SecYEG preprotein conducting channel. Has a central role in coupling the hydrolysis of ATP to the transfer of proteins into and across the cell membrane, serving as an ATP-driven molecular motor driving the stepwise translocation of polypeptide chains across the membrane. The chain is Protein translocase subunit SecA from Lawsonia intracellularis (strain PHE/MN1-00).